We begin with the raw amino-acid sequence, 270 residues long: Nodule lectin (270 aa).

Residues 1 to 33 (MAFYRTNLPTRELFSLVSVVIVLLATNINSVQA) form the signal peptide. A propeptide spanning residues 34–41 (LSFNFTKL) is cleaved from the precursor. Residue Asn-134 is glycosylated (N-linked (GlcNAc...) asparagine).

It belongs to the leguminous lectin family. Glycosylated in a boron-dependent manner. Glycosylation is required for localization to symbiosomes. 3 different glycosylation variants, NLEC-1A, NLEC-1B and NLEC-1C, have been identified. As to expression, expressed in nodules of Rhizobium-infected and uninfected roots and in the root stele near the nodule attachment point. In roots which have been colonized by the endomycorrhizal fungus G.versiforme, detected only in cortical cells colonized by the fungus, mainly those containing arbuscules.

The protein localises to the symbiosome. It is found in the peribacteroid space. The protein resides in the peribacteroid membrane. In terms of biological role, involved in symbiosome development. The chain is Nodule lectin (NLEC1) from Pisum sativum (Garden pea).